The chain runs to 748 residues: Wings apart-like protein homolog 1 (748 aa).

2 disordered regions span residues 23-199 (TLAQ…VYAT) and 614-644 (EGGC…RLDR). A compositionally biased stretch (low complexity) spans 35-64 (PSVRSSDSPDVPDTPDVPVNQLSSPPLSLP). Composition is skewed to polar residues over residues 68-79 (SEGNAETLQNLS) and 87-96 (LSQSSTSSLN). A compositionally biased stretch (low complexity) spans 172–182 (ISSSSNRYSSR). The region spanning 205-723 (KPLASGYGSR…KRLYDFTKAT (519 aa)) is the WAPL domain. Over residues 616–633 (GCGDEEEEEEGGDESSDE) the composition is skewed to acidic residues. Over residues 634–644 (DGVRKDGRLDR) the composition is skewed to basic and acidic residues.

This sequence belongs to the WAPL family.

It is found in the nucleus. Functionally, regulator of meiotic chromosome structure and function, playing a role in sister chromatid cohesion, possibly via antagonizing the coh-3/-4 association with axial elements in nuclei during late prophase, cohesin association with chromatin, DNA double strand break repair and polar body positioning following meiotic divisions during oogenesis. Regulates the morphogenesis and temporal assembly of axial elements to control the organization of meiotic chromosomes in pachytene nuclei and is also involved in meiotic chromosomal remodeling in late pachytene nuclei. Required for the removal of the cohesin component scc-1 from mitotic chromosomes. The polypeptide is Wings apart-like protein homolog 1 (Caenorhabditis elegans).